The following is a 264-amino-acid chain: Thymidylate synthase (264 aa).

DUMP is bound at residue arginine 21. (6R)-5,10-methylene-5,6,7,8-tetrahydrofolate is bound at residue histidine 51. 126–127 (RR) is a binding site for dUMP. Cysteine 146 functions as the Nucleophile in the catalytic mechanism. Residues 166 to 169 (RSAD), asparagine 177, and 207 to 209 (HLY) each bind dUMP. (6R)-5,10-methylene-5,6,7,8-tetrahydrofolate is bound at residue aspartate 169. Residue alanine 263 participates in (6R)-5,10-methylene-5,6,7,8-tetrahydrofolate binding.

Belongs to the thymidylate synthase family. Bacterial-type ThyA subfamily. In terms of assembly, homodimer.

The protein resides in the cytoplasm. It carries out the reaction dUMP + (6R)-5,10-methylene-5,6,7,8-tetrahydrofolate = 7,8-dihydrofolate + dTMP. It functions in the pathway pyrimidine metabolism; dTTP biosynthesis. Catalyzes the reductive methylation of 2'-deoxyuridine-5'-monophosphate (dUMP) to 2'-deoxythymidine-5'-monophosphate (dTMP) while utilizing 5,10-methylenetetrahydrofolate (mTHF) as the methyl donor and reductant in the reaction, yielding dihydrofolate (DHF) as a by-product. This enzymatic reaction provides an intracellular de novo source of dTMP, an essential precursor for DNA biosynthesis. In Legionella pneumophila (strain Corby), this protein is Thymidylate synthase.